A 357-amino-acid chain; its full sequence is Dynein axonemal assembly factor 10 (357 aa).

WD repeat units follow at residues 80 to 127, 132 to 170, 184 to 223, and 277 to 321; these read EFTN…IPIW, AHQG…NSAN, EQTN…IQST, and EPNQ…IDKV.

As to quaternary structure, interacts with PIH1D1; the interaction associates DNAAF10 with the R2TP complex. Interacts with several dynein axonemal assembly factors.

It is found in the dynein axonemal particle. In terms of biological role, key assembly factor specifically required for the stability of axonemal dynein heavy chains in cytoplasm. The sequence is that of Dynein axonemal assembly factor 10 (dnaaf10) from Dictyostelium discoideum (Social amoeba).